Here is a 194-residue protein sequence, read N- to C-terminus: GTP cyclohydrolase-2 (194 aa).

Residue 50–54 (RIHSE) coordinates GTP. 3 residues coordinate Zn(2+): Cys55, Cys66, and Cys68. GTP contacts are provided by residues 94–96 (EGR) and Thr116. Asp128 serves as the catalytic Proton acceptor. The Nucleophile role is filled by Arg130. 2 residues coordinate GTP: Thr151 and Lys156.

This sequence belongs to the GTP cyclohydrolase II family. The cofactor is Zn(2+).

It catalyses the reaction GTP + 4 H2O = 2,5-diamino-6-hydroxy-4-(5-phosphoribosylamino)-pyrimidine + formate + 2 phosphate + 3 H(+). The protein operates within cofactor biosynthesis; riboflavin biosynthesis; 5-amino-6-(D-ribitylamino)uracil from GTP: step 1/4. Catalyzes the conversion of GTP to 2,5-diamino-6-ribosylamino-4(3H)-pyrimidinone 5'-phosphate (DARP), formate and pyrophosphate. The protein is GTP cyclohydrolase-2 of Helicobacter hepaticus (strain ATCC 51449 / 3B1).